Consider the following 242-residue polypeptide: 1-(5-phosphoribosyl)-5-[(5-phosphoribosylamino)methylideneamino] imidazole-4-carboxamide isomerase (242 aa).

The active-site Proton acceptor is the Asp10. Residue Asp132 is the Proton donor of the active site.

The protein belongs to the HisA/HisF family.

The protein resides in the cytoplasm. It carries out the reaction 1-(5-phospho-beta-D-ribosyl)-5-[(5-phospho-beta-D-ribosylamino)methylideneamino]imidazole-4-carboxamide = 5-[(5-phospho-1-deoxy-D-ribulos-1-ylimino)methylamino]-1-(5-phospho-beta-D-ribosyl)imidazole-4-carboxamide. The protein operates within amino-acid biosynthesis; L-histidine biosynthesis; L-histidine from 5-phospho-alpha-D-ribose 1-diphosphate: step 4/9. The protein is 1-(5-phosphoribosyl)-5-[(5-phosphoribosylamino)methylideneamino] imidazole-4-carboxamide isomerase of Methanopyrus kandleri (strain AV19 / DSM 6324 / JCM 9639 / NBRC 100938).